A 97-amino-acid chain; its full sequence is Thiosulfate sulfurtransferase/rhodanese-like domain-containing protein 3 (97 aa).

Residues 32-84 (YKELKNLLNSKNIMLIDVREIWEILEYQKIPESINVPLDEVGEALQMNPRDFK) enclose the Rhodanese domain. K84 carries the N6-succinyllysine modification.

In Homo sapiens (Human), this protein is Thiosulfate sulfurtransferase/rhodanese-like domain-containing protein 3 (TSTD3).